Reading from the N-terminus, the 187-residue chain is Elongation factor P (187 aa).

Belongs to the elongation factor P family.

It localises to the cytoplasm. It participates in protein biosynthesis; polypeptide chain elongation. In terms of biological role, involved in peptide bond synthesis. Stimulates efficient translation and peptide-bond synthesis on native or reconstituted 70S ribosomes in vitro. Probably functions indirectly by altering the affinity of the ribosome for aminoacyl-tRNA, thus increasing their reactivity as acceptors for peptidyl transferase. The sequence is that of Elongation factor P from Paenarthrobacter aurescens (strain TC1).